Here is a 160-residue protein sequence, read N- to C-terminus: CXXC motif containing zinc binding protein (160 aa).

Residues Cys33, Cys36, Cys67, and Cys70 each contribute to the Zn(2+) site. A Phosphoserine modification is found at Ser75.

The protein belongs to the UPF0587 family. Monomer.

This Mus musculus (Mouse) protein is CXXC motif containing zinc binding protein (Czib).